The sequence spans 1786 residues: Protein TIC 214 (1786 aa).

6 consecutive transmembrane segments (helical) span residues 19 to 39 (IINS…FSIG), 68 to 88 (FIAG…HLAL), 91 to 111 (PHTI…WNNH), 133 to 153 (VFLN…SSML), 176 to 196 (VGWL…LVWI), and 227 to 247 (IFSI…PSPI). Positions 1007–1046 (SLSEKKIKNLIDRKKTIRNQIEEISKEKQNLTNSCTKLRY) form a coiled coil.

It belongs to the TIC214 family. In terms of assembly, part of the Tic complex. Component of the 1-MD complex, composed of TIC20-I, TIC214, TIC100 and TIC56. Interacts with the translocating preproteins. Hydrolysis of ATP is essential for the formation of this complex. The 1-MD complex interacts with TIC21.

The protein resides in the plastid. Its subcellular location is the chloroplast inner membrane. Involved in protein precursor import into chloroplasts. May be part of an intermediate translocation complex acting as a protein-conducting channel at the inner envelope. The chain is Protein TIC 214 from Arabidopsis thaliana (Mouse-ear cress).